The following is a 202-amino-acid chain: ADP-ribosylation factor-like protein 15 (202 aa).

GTP-binding positions include glycine 39–threonine 46, glutamate 82–alanine 86, and asparagine 142–aspartate 145.

It belongs to the small GTPase superfamily. Arf family.

The sequence is that of ADP-ribosylation factor-like protein 15 (ARL15) from Bos taurus (Bovine).